Here is a 992-residue protein sequence, read N- to C-terminus: MRKLFSFGRRLGQALLSSMDQEYAGPGYDIRDWELRKIHRAAIKGDAAEVERCLTRRFRDLDARDRKDRTVLHLACAHGRVQVVTLLLHRRCQIDICDRLNRTPLMKAVHSQEEACAIVLLECGANPNIEDIYGNTALHYAVYNKGTSLAERLLSHHANIEALNKEGNTPLLFAINSRRQHMVEFLLKNQANIHAVDNFKRTALILAVQHNLSSIVTLLLQQNIRISSQDMFGQTAEDYALCSDLRSIRQQILEHKNKMLKNHLRNDNQETAAMKPANLKKRKERAKAEHNLKVASEEKQERLQRSENKQPQDSQSYGKKKDAMYGNFMLKKDIAMLKEELYAIKNDSLRKEKKYIQEIKSITEINANFEKSVRLNEKMITKTVARYSQQLNDLKAENARLNSELEKEKHNKERLEAEVESLHSSLATAINEYNEIVERKDLELVLWRADDVSRHEKMGSNISQLTDKNELLTEQVHKARVKFNTLKGKLRETRDALREKTLALGSVQLDLRQAQHRIKEMKQMHPNGEAKESQSIGKQNSLEERIRQQELENLLLERQLEDARKEGDNKEIVINIHRDCLENGKEDLLEERNKELMKEYNYLKEKLLQCEKEKAEREVIVREFQEELVDHLKTFSISESPLEGTSHCHINLNETWTSKKKLFQVEIQPEEKHEEFRKLFELISLLNYTADQIRKKNRELEEEATGYKKCLEMTINMLNAFANEDFSCHGDLNTDQLKMDILFKKLKQKFNDLVAEKEAVSSECVNLAKDNEVLHQELLSMRNVQEKCEKLEKDKKMLEEEVLNLKTHMEKDMVELGKLQEYKSELDERAVQEIEKLEEIHLQKQAEYEKQLEQLNKDNTASLKKKELTLKDVECKFSKMKTAYEEVTTELEEFKEAFAGAVKANNSMSKKLMKSDKKIAVISTKLFTEKQRMKYFLSTLPTRPEPELPCVENLNSIELNRKYIPKTAIRIPTSNPQTSNNCKNFLTEVLLC.

ANK repeat units follow at residues 67 to 96, 100 to 129, 133 to 162, 166 to 195, and 199 to 228; these read KDRT…QIDI, LNRT…NPNI, YGNT…NIEA, EGNT…NIHA, and FKRT…RISS. A disordered region spans residues 262–320; it reads NHLRNDNQETAAMKPANLKKRKERAKAEHNLKVASEEKQERLQRSENKQPQDSQSYGKK. Coiled coils occupy residues 278 to 310, 378 to 618, 683 to 713, and 743 to 899; these read NLKK…ENKQ, KMIT…AERE, ISLL…CLEM, and FKKL…EAFA. The segment covering 286-310 has biased composition (basic and acidic residues); it reads AKAEHNLKVASEEKQERLQRSENKQ.

This chain is Ankyrin repeat domain-containing protein 18A (ANKRD18A), found in Homo sapiens (Human).